The following is a 637-amino-acid chain: Protein arginine N-methyltransferase 5 (637 aa).

An N-acetylalanine modification is found at A2. The segment at 13–292 (RVSSGRDLNC…YLEYLSQNRP (280 aa)) is TIM barrel. One can recognise an SAM-dependent MTase PRMT-type domain in the interval 308-615 (LQSPLQPLMD…SNSKKVWYEW (308 aa)). Y324 lines the S-adenosyl-L-methionine pocket. Residue F327 participates in a protein binding. S-adenosyl-L-methionine-binding positions include 333–334 (KY), E392, and 419–420 (DM). A protein contacts are provided by E435 and E444. Catalysis depends on proton donor/acceptor residues E435 and E444. The tract at residues 465–637 (PGEYTSFLAP…PTGRSYTIGL (173 aa)) is beta barrel. Residues 488–494 (REKDRDP) are dimerization.

The protein belongs to the class I-like SAM-binding methyltransferase superfamily. Protein arginine N-methyltransferase family. As to quaternary structure, forms, at least, homodimers and homotetramers. Component of the methylosome complex, composed of PRMT5, WDR77 and CLNS1A. Found in a complex composed of PRMT5, WDR77 and RIOK1. RIOK1 and CLNS1A associate with PRMT5 in a mutually exclusive fashion, which allows the recruitment of distinct methylation substrates, such as nucleolin/NCL and Sm proteins, respectively. Interacts with PRDM1. Identified in a complex composed of methylosome and PRMT1 and ERH. Interacts with EGFR; methylates EGFR and stimulates EGFR-mediated ERK activation. Interacts with HOXA9. Interacts with SRGAP2. Found in a complex with COPRS, RUNX1 and CBFB. Interacts with CHTOP; the interaction symmetrically methylates CHTOP, but seems to require the presence of PRMT1. Interacts with EPB41L3; this modulates methylation of target proteins. Component of a high molecular weight E2F-pocket protein complex, CERC (cyclin E1 repressor complex). Associates with SWI/SNF remodeling complexes containing SMARCA2 and SMARCA4. Interacts with JAK2, SSTR1, SUPT5H, BRAF and with active RAF1. Interacts with LSM11, PRMT7 and SNRPD3. Interacts with COPRS; promoting its recruitment on histone H4. Interacts with CLNS1A/pICln. Identified in a complex with CLNS1A/pICln and Sm proteins. Interacts with RPS10. Interacts with WDR77. Interacts with IWS1. Interacts with CRY1. Interacts with POLR2A. Interacts with SMN1/SMN2. Interacts with LYAR; this interaction is direct. Interacts with TTC5/STRAP; this interaction is DNA damage-dependent and promotes PRMT5 interaction with p53/TP53. Interacts with p53/TP53 in response to DNA damage; the interaction is TTC5/STRAP dependent. Interacts with FAM47E; the interaction is direct, promotes PRMT5 localization to chromatin, and does not disrupt its association with WDR77 or STUB1. Interacts with TDRD6. Interacts with STUB1. Interacts with MBD2. Does not interact with MBD3.

The protein resides in the cytoplasm. It localises to the nucleus. It is found in the golgi apparatus. It catalyses the reaction L-arginyl-[protein] + 2 S-adenosyl-L-methionine = N(omega),N(omega)'-dimethyl-L-arginyl-[protein] + 2 S-adenosyl-L-homocysteine + 2 H(+). Its activity is regulated as follows. Activity is increased by EGF, HGF, FGF1 or FGF2 treatments, and slightly decreased by NGF treatment. Its function is as follows. Arginine methyltransferase that can both catalyze the formation of omega-N monomethylarginine (MMA) and symmetrical dimethylarginine (sDMA), with a preference for the formation of MMA. Specifically mediates the symmetrical dimethylation of arginine residues in the small nuclear ribonucleoproteins Sm D1 (SNRPD1) and Sm D3 (SNRPD3); such methylation being required for the assembly and biogenesis of snRNP core particles. Methylates SUPT5H and may regulate its transcriptional elongation properties. May methylate the N-terminal region of MBD2. Mono- and dimethylates arginine residues of myelin basic protein (MBP) in vitro. May play a role in cytokine-activated transduction pathways. Negatively regulates cyclin E1 promoter activity and cellular proliferation. Methylates histone H2A and H4 'Arg-3' during germ cell development. Methylates histone H3 'Arg-8', which may repress transcription. Methylates the Piwi proteins (PIWIL1, PIWIL2 and PIWIL4), methylation of Piwi proteins being required for the interaction with Tudor domain-containing proteins and subsequent localization to the meiotic nuage. Methylates RPS10. Attenuates EGF signaling through the MAPK1/MAPK3 pathway acting at 2 levels. First, monomethylates EGFR; this enhances EGFR 'Tyr-1197' phosphorylation and PTPN6 recruitment, eventually leading to reduced SOS1 phosphorylation. Second, methylates RAF1 and probably BRAF, hence destabilizing these 2 signaling proteins and reducing their catalytic activity. Required for induction of E-selectin and VCAM-1, on the endothelial cells surface at sites of inflammation. Methylates HOXA9. Methylates and regulates SRGAP2 which is involved in cell migration and differentiation. Acts as a transcriptional corepressor in CRY1-mediated repression of the core circadian component PER1 by regulating the H4R3 dimethylation at the PER1 promoter. Methylates GM130/GOLGA2, regulating Golgi ribbon formation. Methylates H4R3 in genes involved in glioblastomagenesis in a CHTOP- and/or TET1-dependent manner. Symmetrically methylates POLR2A, a modification that allows the recruitment to POLR2A of proteins including SMN1/SMN2 and SETX. This is required for resolving RNA-DNA hybrids created by RNA polymerase II, that form R-loop in transcription terminal regions, an important step in proper transcription termination. Along with LYAR, binds the promoter of gamma-globin HBG1/HBG2 and represses its expression. Symmetrically methylates NCL. Methylates p53/TP53; methylation might possibly affect p53/TP53 target gene specificity. Involved in spliceosome maturation and mRNA splicing in prophase I spermatocytes through the catalysis of the symmetrical arginine dimethylation of SNRPB (small nuclear ribonucleoprotein-associated protein) and the interaction with tudor domain-containing protein TDRD6. This is Protein arginine N-methyltransferase 5 (Prmt5) from Mus musculus (Mouse).